The sequence spans 453 residues: Bifunctional protein GlmU (453 aa).

The segment at 1–231 (MERTCLAVIL…EIEMTGCNTR (231 aa)) is pyrophosphorylase. UDP-N-acetyl-alpha-D-glucosamine contacts are provided by residues 10–13 (LAAG), Lys-24, Gln-77, 82–83 (GT), 105–107 (YGD), Gly-143, Glu-157, Asn-172, and Asn-229. Position 107 (Asp-107) interacts with Mg(2+). Asn-229 provides a ligand contact to Mg(2+). The tract at residues 232–252 (AELAVIERFWQERRRHQLMLS) is linker. The N-acetyltransferase stretch occupies residues 253-453 (GVTMIAPETV…ATKAAKKAKG (201 aa)). UDP-N-acetyl-alpha-D-glucosamine contacts are provided by Arg-318 and Lys-336. Catalysis depends on His-348, which acts as the Proton acceptor. UDP-N-acetyl-alpha-D-glucosamine-binding residues include Tyr-351 and Asn-362. Residues Ala-365, 371-372 (NY), Ser-390, Ser-408, and Arg-425 contribute to the acetyl-CoA site.

This sequence in the N-terminal section; belongs to the N-acetylglucosamine-1-phosphate uridyltransferase family. It in the C-terminal section; belongs to the transferase hexapeptide repeat family. As to quaternary structure, homotrimer. Mg(2+) serves as cofactor.

It localises to the cytoplasm. It carries out the reaction alpha-D-glucosamine 1-phosphate + acetyl-CoA = N-acetyl-alpha-D-glucosamine 1-phosphate + CoA + H(+). The catalysed reaction is N-acetyl-alpha-D-glucosamine 1-phosphate + UTP + H(+) = UDP-N-acetyl-alpha-D-glucosamine + diphosphate. Its pathway is nucleotide-sugar biosynthesis; UDP-N-acetyl-alpha-D-glucosamine biosynthesis; N-acetyl-alpha-D-glucosamine 1-phosphate from alpha-D-glucosamine 6-phosphate (route II): step 2/2. The protein operates within nucleotide-sugar biosynthesis; UDP-N-acetyl-alpha-D-glucosamine biosynthesis; UDP-N-acetyl-alpha-D-glucosamine from N-acetyl-alpha-D-glucosamine 1-phosphate: step 1/1. It participates in bacterial outer membrane biogenesis; LPS lipid A biosynthesis. Catalyzes the last two sequential reactions in the de novo biosynthetic pathway for UDP-N-acetylglucosamine (UDP-GlcNAc). The C-terminal domain catalyzes the transfer of acetyl group from acetyl coenzyme A to glucosamine-1-phosphate (GlcN-1-P) to produce N-acetylglucosamine-1-phosphate (GlcNAc-1-P), which is converted into UDP-GlcNAc by the transfer of uridine 5-monophosphate (from uridine 5-triphosphate), a reaction catalyzed by the N-terminal domain. The sequence is that of Bifunctional protein GlmU from Rhizobium leguminosarum bv. trifolii (strain WSM2304).